A 1001-amino-acid polypeptide reads, in one-letter code: ATP-dependent DNA/RNA helicase DHX36 (1001 aa).

The tract at residues 1 to 44 is required for recruitment to cytoplasmic stress granules; sequence MSYDYHQSWSRDGGPRGSGQGSSGGGGGGSRGSGGGGGGRGGRG. A disordered region spans residues 1-54; that stretch reads MSYDYHQSWSRDGGPRGSGQGSSGGGGGGSRGSGGGGGGRGGRGRHPAHLKGRE. Positions 1 to 97 are required for the pre-miR-134 transport; sequence MSYDYHQSWS…IVQLLNSVQA (97 aa). Residues 1-193 form a necessary for nuclear and nucleolar caps localizations region; that stretch reads MSYDYHQSWS…KKTDPRYIEM (193 aa). Over residues 15–41 the composition is skewed to gly residues; sequence PRGSGQGSSGGGGGGSRGSGGGGGGRG. The DSM (DHX36-specific motif) stretch occupies residues 46–68; sequence HPAHLKGREIGLWYAKKQTQKNK. The tract at residues 46–98 is required for G4-DNA- and G4-RNA-binding; the sequence is HPAHLKGREIGLWYAKKQTQKNKEAERQERAVVHMDERREEQIVQLLNSVQAK. RecA-like domain regions lie at residues 99–379 and 380–621; these read TDKD…MIHI and PGFT…DYQL. Residues 120–147 are a coiled coil; the sequence is EVSSEKKINSEKKLDNQEKKLLNQEKKT. At Ser154 the chain carries Phosphoserine. Positions 210–380 constitute a Helicase ATP-binding domain; the sequence is VNLINNHQVT…FGNCPMIHIP (171 aa). 226–231 provides a ligand contact to ATP; sequence GCGKTT. The tract at residues 258–310 is necessary for interaction with single-stranded DNA at the 3'-end of the G4-DNA structure; it reads RRISAISVAERVATERAESCGNGNSTGYQIRLQSRLPRKQGSILYCTTGIILQ. Positions 327-330 match the DEAH box motif; sequence DEIH. Positions 328 and 330 each coordinate Mg(2+). Residues 470 to 640 form the Helicase C-terminal domain; that stretch reads ALIRYIVLEE…ELCLQIKILR (171 aa). Residues 491-550 are necessary for interaction with single-stranded DNA at the 3'-end of the G4-DNA structure; it reads WDNISTLHDLLMSQVMFKSDKFLIIPLHSLMPTVNQTQVFKKTPPGVRKIVIATNIAETS. The short motif at 510-521 is the Nuclear localization signal element; sequence DKFLIIPLHSLM. Residues Ser550 and 595-598 each bind ATP; that span reads RAGR. The segment at 622 to 691 is WH domain; it reads PEILRTPLEE…LGVHLARLPV (70 aa). Necessary for interaction with single-stranded DNA at the 3'-end of the G4-DNA structure regions lie at residues 631-690, 842-853, and 863-893; these read ELCL…ARLP, NLGKKRKMVKVH, and HPKSVNVEQTDFHYNWLIYHLKMRTSSIYLY. Residues 834–898 form an OB-fold-like subdomains region; that stretch reads PKVAKIRLNL…SIYLYDCTEV (65 aa). Lys940 is subject to N6-acetyllysine. Ser956 is modified (phosphoserine).

Belongs to the DEAD box helicase family. DEAH subfamily. Found in a multi-helicase-TICAM1 complex at least composed of DHX36, DDX1, DDX21 and TICAM1; this complex exists in resting cells with or without dsRNA poly(I:C) ligand stimulation. Interacts (via C-terminus) with TICAM1 (via TIR domain). Interacts (via C-terminus) with DDX21; this interaction serves as bridges to TICAM1. Interacts with TERT; this interaction is dependent on the ability of DHX36 to bind to the G-quadruplex RNA (G4-RNA) structure present in the telomerase RNA template component (TERC). Interacts with DKC1; this interaction is dependent on the ability of DHX36 to bind to the G4-RNA structure present in TERC. Interacts with PARN; this interaction stimulates PARN to enhance uPA mRNA decay. Interacts with EXOSC3; this interaction occurs in a RNase-insensitive manner. Interacts with EXOSC10; this interaction occurs in a RNase-insensitive manner. Interacts with ILF3; this interaction occurs in a RNA-dependent manner. Interacts with ELAVL1; this interaction occurs in an RNA-dependent manner. Interacts with DDX5; this interaction occurs in a RNA-dependent manner. Interacts with DDX17; this interaction occurs in a RNA-dependent manner. Interacts with HDAC1; this interaction occurs in a RNA-dependent manner. Interacts with HDAC3; this interaction occurs in a RNA-dependent manner. Interacts with HDAC4. Interacts with AGO1. Interacts with AGO2. Interacts with ERCC6. It depends on Mg(2+) as a cofactor. Expressed in spermatogonia stem cells and primary spermatocytes (at protein level). Expressed strongly in testis. Weakly expressed in heart, lung, liver, kidney, small intestine, spleen, lymphe node and thymus.

It is found in the nucleus. The protein resides in the cytoplasm. It localises to the cytosol. Its subcellular location is the stress granule. The protein localises to the nucleus speckle. It is found in the chromosome. The protein resides in the telomere. It localises to the mitochondrion. Its subcellular location is the perikaryon. The protein localises to the cell projection. It is found in the dendrite. The protein resides in the axon. The catalysed reaction is ATP + H2O = ADP + phosphate + H(+). ATPase activity is enhanced in the presence of homomeric poly(U) RNAs, but not by double-stranded DNA (dsDNA), double-stranded RNA (dsRNA) and tRNA. Functionally, multifunctional ATP-dependent helicase that unwinds G-quadruplex (G4) structures. Plays a role in many biological processes such as genomic integrity, gene expression regulations and as a sensor to initiate antiviral responses. G4 structures correspond to helical structures containing guanine tetrads. Binds with high affinity to and unwinds G4 structures that are formed in nucleic acids (G4-DNA and G4-RNA). Plays a role in genomic integrity. Converts the G4-RNA structure present in telomerase RNA template component (TREC) into a double-stranded RNA to promote P1 helix formation that acts as a template boundary ensuring accurate reverse transcription. Plays a role in transcriptional regulation. Resolves G4-DNA structures in promoters of genes, such as YY1, KIT/c-kit and ALPL and positively regulates their expression. Plays a role in post-transcriptional regulation. Unwinds a G4-RNA structure located in the 3'-UTR polyadenylation site of the pre-mRNA TP53 and stimulates TP53 pre-mRNA 3'-end processing in response to ultraviolet (UV)-induced DNA damage. Binds to the precursor-microRNA-134 (pre-miR-134) terminal loop and regulates its transport into the synapto-dendritic compartment. Involved in the pre-miR-134-dependent inhibition of target gene expression and the control of dendritic spine size. Plays a role in the regulation of cytoplasmic mRNA translation and mRNA stability. Binds to both G4-RNA structures and alternative non-quadruplex-forming sequence within the 3'-UTR of the PITX1 mRNA regulating negatively PITX1 protein expression. Binds to both G4-RNA structure in the 5'-UTR and AU-rich elements (AREs) localized in the 3'-UTR of NKX2-5 mRNA to either stimulate protein translation or induce mRNA decay in an ELAVL1-dependent manner, respectively. Also binds to ARE sequences present in several mRNAs mediating exosome-mediated 3'-5' mRNA degradation. Involved in cytoplasmic urokinase-type plasminogen activator (uPA) mRNA decay. Component of a multi-helicase-TICAM1 complex that acts as a cytoplasmic sensor of viral double-stranded RNA (dsRNA) and plays a role in the activation of a cascade of antiviral responses including the induction of pro-inflammatory cytokines via the adapter molecule TICAM1. Required for the early embryonic development and hematopoiesis. Involved in the regulation of cardioblast differentiation and proliferation during heart development. Involved in spermatogonia differentiation. May play a role in ossification. This is ATP-dependent DNA/RNA helicase DHX36 from Mus musculus (Mouse).